The following is a 447-amino-acid chain: Protein odr-4 homolog (447 aa).

2 helical membrane passes run 82–102 (MLPG…ELAD) and 425–445 (IGVI…FHYF).

The protein belongs to the ODR-4 family. In terms of tissue distribution, ubiquitously expressed.

It localises to the membrane. Functionally, may play a role in the trafficking of a subset of G-protein coupled receptors. This chain is Protein odr-4 homolog (Odr4), found in Mus musculus (Mouse).